Consider the following 217-residue polypeptide: Putative oxidative stress regulator AosR (217 aa).

The CXXXC motif lies at cysteine 5–cysteine 9. Cysteine 5 and cysteine 9 are joined by a disulfide.

This sequence belongs to the AosR family.

This Mycobacterium leprae (strain TN) protein is Putative oxidative stress regulator AosR.